Consider the following 340-residue polypeptide: Organic solute transporter subunit alpha (340 aa).

The Extracellular portion of the chain corresponds to 1–48 (MEPGRTHIKLDPRYTAELLELLETNYSISPACFSHPPTAAQLLRALGP). The N-linked (GlcNAc...) asparagine glycan is linked to N25. Residues 49 to 69 (VDIALTIILTFLTTGSVAIFL) traverse the membrane as a helical segment. The Cytoplasmic portion of the chain corresponds to 70 to 87 (EDAVYLYKNTLCPIKKRT). A helical transmembrane segment spans residues 88 to 108 (LIWSSSAPTVVSVFCCFGLWI). The Extracellular segment spans residues 109–114 (PRALTL). Residues 115–135 (VEMAITSFYAVCFYLLMMVMV) form a helical membrane-spanning segment. Topologically, residues 136–181 (EGFGGKKAVLRTLKDTPMRVHTGPCCCCCPCCPPLILTRKKLQLLL) are cytoplasmic. The helical transmembrane segment at 182–202 (LGPFQYAFFKITLSIVGLFLI) threads the bilayer. The Extracellular portion of the chain corresponds to 203–219 (PDGIYDPGEISEKSAAL). A helical transmembrane segment spans residues 220 to 240 (WINNLLAVSTLLALWSLAILF). At 241–255 (RQAKMHLGEQNMGSK) the chain is on the cytoplasmic side. The chain crosses the membrane as a helical span at residues 256-276 (FALFQVLVILTALQPAIFSIL). Topologically, residues 277-297 (ANSGQIACSPPYSSKIRSQVM) are extracellular. Residues 298 to 317 (NCHMLILETFLMTVLTRMYY) form a helical membrane-spanning segment. Over 318–340 (RRKDDKVGYEACSLPDLDSALKA) the chain is Cytoplasmic. Residue S330 is modified to Phosphoserine.

It belongs to the OST-alpha family. As to quaternary structure, interacts with SLC51B. The Ost-alpha/Ost-beta complex is a heterodimer composed of alpha (SLC51A) and beta (SLC51B) subunit. N-glycosylated. Present at high levels in ileum. In ileum, it is restricted to the apical domain on the mature villus enterocytes with little detectable expression in the goblet cells or crypt enterocytes (at protein level). Expressed in kidney but not in heart, brain, liver, spleen, embryo, lung, thymus, ovary nor testis.

The protein resides in the cell membrane. Its subcellular location is the endoplasmic reticulum membrane. The enzyme catalyses taurocholate(out) = taurocholate(in). It carries out the reaction tauroursodeoxycholate(out) = tauroursodeoxycholate(in). The catalysed reaction is glycoursodeoxycholate(out) = glycoursodeoxycholate(in). It catalyses the reaction glycocholate(out) = glycocholate(in). The enzyme catalyses taurochenodeoxycholate(out) = taurochenodeoxycholate(in). It carries out the reaction glycochenodeoxycholate(out) = glycochenodeoxycholate(in). The catalysed reaction is taurodeoxycholate(out) = taurodeoxycholate(in). It catalyses the reaction glycodeoxycholate(out) = glycodeoxycholate(in). The enzyme catalyses prostaglandin E2(out) = prostaglandin E2(in). It carries out the reaction estrone 3-sulfate(out) = estrone 3-sulfate(in). The catalysed reaction is dehydroepiandrosterone 3-sulfate(out) = dehydroepiandrosterone 3-sulfate(in). Functionally, essential component of the Ost-alpha/Ost-beta complex, a heterodimer that acts as the intestinal basolateral transporter responsible for bile acid export from enterocytes into portal blood. Efficiently transports the major species of bile acids (taurocholate). Taurine conjugates are transported more efficiently across the basolateral membrane than glycine-conjugated bile acids. Can also transport steroids such as estrone 3-sulfate and dehydroepiandrosterone 3-sulfate, therefore playing a role in the enterohepatic circulation of sterols. Able to transport eicosanoids such as prostaglandin E2. The protein is Organic solute transporter subunit alpha (Slc51a) of Mus musculus (Mouse).